The primary structure comprises 453 residues: MSFDLIIKNGTVILENEARVIDIAVQGGKIAAIGENLGEAKNVLDATGLIVSPGMVDAHTHISEPGRTHWEGYETGTRAAAKGGITTMIEMPLNQLPATVDRETIELKFDAAKGKLTIDAAQLGGLVSYNLDRLHELDEVGVVGFKCFVATCGDRGIDNDFRDVNDWQFYKGAQKLGEMDQTVLVHCENALICDELGEEAKREGRVTAHDYVASRPVFTEVEAIRRVLYLAKAAGCRLHVCHISSPEGVEEVTRARQEGQDVTCESCPHYFVLDTDQFEEIGTLAKCSPPIRDQENQKGMWEKLFNGEIDCLVSDHSPCPPEMKAGNIMQAWGGIAGLQNCMDVMFDEAVQKRGMSLPMFGKLMATNAADIFGLKHKGRIAPGKDADLVFIQPDSSYVLKNEDLEYRHKVSPYVGRTIGARITKTILRGDVIYDIEHGFPVPPKGQFILKHQQ.

The Zn(2+) site is built by His59, His61, Lys146, His186, His242, and Asp315. An N6-carboxylysine modification is found at Lys146.

Belongs to the metallo-dependent hydrolases superfamily. Allantoinase family. Homotetramer. Zn(2+) is required as a cofactor. In terms of processing, carboxylation allows a single lysine to coordinate two zinc ions.

The catalysed reaction is (S)-allantoin + H2O = allantoate + H(+). It participates in nitrogen metabolism; (S)-allantoin degradation; allantoate from (S)-allantoin: step 1/1. In terms of biological role, catalyzes the conversion of allantoin (5-ureidohydantoin) to allantoic acid by hydrolytic cleavage of the five-member hydantoin ring. This is Allantoinase from Salmonella agona (strain SL483).